An 852-amino-acid chain; its full sequence is MFKSKTSTLSYDETPNSNEGDRNATPVNPKEKSQTKHLNIPGDRSRHSSIADSKRSSSRYDGGYSADIIPAQLRFIDNIDYGTRLRKTLHRNSVVSNGYNKLSENDRWYFDLFDRKYFENYLEEPTYIKIFKKKEGLEQFDRMFLAQELKIPDVYKSTTYQGEPAVANSELFKNSICCCTFSHDGKYMVIGCKDGSLHLWKVINSPVKRSEMGRSEKSVSASRANSLKIQRHLASISSHNGSISSNDLKPSDQFEGPSKQLHLYAPVFYSDVFRVFMEHALDILDANWSKNGFLITASMDKTAKLWHPERKYSLKTFVHPDFVTSAIFFPNDDRFIITGCLDHRCRLWSILDNEVSYAFDCKDLITSLTLSPPGGEYTIIGTFNGYIYVLLTHGLKFVSSFHVSDKSTQGTTKNSFHPSSEYGKVQHGPRITGLQCFFSKVDKNLRLIVTTNDSKIQIFDLNEKKPLELFKGFQSGSSRHRGQFLMMKNEPVVFTGSDDHWFYTWKMQSFNLSAEMNCTAPHRKKRLSGSMSLKGLLRIVSNKSTNDECLTETSNQSSSHTFTNSSKNVLQTQTVGSQAIKNNHYISFHAHNSPVTCASIAPDVAIKNLSLSNDLIFELTSQYFKEMGQNYSESKETCDNKPNHPVTETGGFSSNLSNVVNNVGTILITTDSQGLIRVFRTDILPEIRKKIIEKFHEYNLFHLEAAGKINNHNNDSILENRMDERSSTEDNEFSTTPPSNTHNSRPSHDFCELHPNNSPVISGMPSRASAIFKNSIFNKSNGSFISLKSRSESTSSTVFGPHDIPRVSTTYPKLKCDVCNGSNFECASKNPIAGGDSGFTCADCGTILNNFR.

Polar residues predominate over residues M1–N18. The disordered stretch occupies residues M1 to Y60. WD repeat units follow at residues L171–S210, E278–T316, V318–A358, Q426–K471, G476–E515, and G651–K689. Phosphoserine is present on S716. The interval D723–H748 is disordered. Polar residues predominate over residues F733 to S744.

The protein belongs to the WD repeat DGR2 family.

The sequence is that of 2-deoxy-glucose resistant protein 2 (DGR2) from Saccharomyces cerevisiae (strain ATCC 204508 / S288c) (Baker's yeast).